Reading from the N-terminus, the 203-residue chain is METLSQDSLLECQICFNYYSPRRRPKLLDCKHTCCSVCLQQMRTSQKDVRCPWCRGITKLPPGFSVSQLPDDPEVLAVIAIPHTSEHTPVFIKLPSNGCYMLPLPISKERTLLPGDMGCRLLPGSQQKSLTVVTIPAEQQPLQGGAPQEAVEEEPDRRGVAKSSTWSGVCTVILVACVLVFLLGIVLHNMSCISKRFTVISCG.

An RING-type zinc finger spans residues 12–55 (CQICFNYYSPRRRPKLLDCKHTCCSVCLQQMRTSQKDVRCPWCR). The segment at 106–165 (ISKERTLLPGDMGCRLLPGSQQKSLTVVTIPAEQQPLQGGAPQEAVEEEPDRRGVAKSST) is necessary for interaction with RRAGA. Residues 140–159 (QPLQGGAPQEAVEEEPDRRG) are disordered. Residues 167–187 (SGVCTVILVACVLVFLLGIVL) traverse the membrane as a helical segment.

The protein belongs to the RNF152 family. Interacts with RRAGA (inactive GDP-bound form); stimulated by amino acid starvation. Interacts with SEC16A. In terms of processing, ubiquitinated. Autoubiquitinated in vitro, leading to its degradation by the proteasome.

The protein localises to the lysosome membrane. The catalysed reaction is S-ubiquitinyl-[E2 ubiquitin-conjugating enzyme]-L-cysteine + [acceptor protein]-L-lysine = [E2 ubiquitin-conjugating enzyme]-L-cysteine + N(6)-ubiquitinyl-[acceptor protein]-L-lysine.. Its pathway is protein modification; protein ubiquitination. In terms of biological role, E3 ubiquitin-protein ligase that acts as a negative regulator of mTORC1 signaling by mediating ubiquitination of RagA/RRAGA and RHEB. Catalyzes 'Lys-63'-linked polyubiquitination of RagA/RRAGA in response to amino acid starvation, thereby regulating mTORC1 signaling. Also mediates monoubiquitination of RHEB, promoting its association with the TSC-TBC complex and subsequent inhibition. Also mediates 'Lys-48'-linked polyubiquitination of target proteins and their subsequent targeting to the proteasome for degradation. Induces apoptosis when overexpressed. The sequence is that of E3 ubiquitin-protein ligase RNF152 from Rattus norvegicus (Rat).